The following is a 364-amino-acid chain: Fructose-bisphosphate aldolase A (364 aa).

Tyr5 is modified (phosphotyrosine). Position 9 is a phosphothreonine (Thr9). 2 positions are modified to phosphoserine: Ser36 and Ser39. Lys42 is subject to N6-acetyllysine; alternate. Residue Lys42 forms a Glycyl lysine isopeptide (Lys-Gly) (interchain with G-Cter in SUMO1); alternate linkage. A Glycyl lysine isopeptide (Lys-Gly) (interchain with G-Cter in SUMO2); alternate cross-link involves residue Lys42. Arg43 is a beta-D-fructose 1,6-bisphosphate binding site. Ser46 bears the Phosphoserine mark. Lys99 bears the N6-(2-hydroxyisobutyryl)lysine mark. Lys108 bears the N6-acetyllysine mark. Lys111 bears the N6-acetyllysine; alternate mark. Lys111 is subject to N6-malonyllysine; alternate. A Phosphoserine modification is found at Ser132. Lys147 carries the N6-(2-hydroxyisobutyryl)lysine modification. Glu188 functions as the Proton acceptor in the catalytic mechanism. Catalysis depends on Lys230, which acts as the Schiff-base intermediate with dihydroxyacetone-P. A Phosphoserine modification is found at Ser272. Residues 272 to 274 (SGG), Ser301, and Arg304 each bind beta-D-fructose 1,6-bisphosphate. Lys312 is modified (N6-malonyllysine). Position 330 is an N6-acetyllysine (Lys330).

The protein belongs to the class I fructose-bisphosphate aldolase family. As to quaternary structure, homotetramer. Interacts with SNX9 and WAS. Interacts with FBP2; the interaction blocks FBP2 inhibition by physiological concentrations of AMP and reduces inhibition by Ca(2+).

Its subcellular location is the cytoplasm. The protein localises to the myofibril. It is found in the sarcomere. It localises to the i band. The protein resides in the m line. It catalyses the reaction beta-D-fructose 1,6-bisphosphate = D-glyceraldehyde 3-phosphate + dihydroxyacetone phosphate. The protein operates within carbohydrate degradation; glycolysis; D-glyceraldehyde 3-phosphate and glycerone phosphate from D-glucose: step 4/4. Functionally, catalyzes the reversible conversion of beta-D-fructose 1,6-bisphosphate (FBP) into two triose phosphate and plays a key role in glycolysis and gluconeogenesis. In addition, may also function as scaffolding protein. This chain is Fructose-bisphosphate aldolase A (ALDOA), found in Pan troglodytes (Chimpanzee).